The sequence spans 638 residues: Intron-encoded RNA maturase bI4 (638 aa).

The COB exons 1 to 4 encoded stretch occupies residues 1–253; sequence MAFRKSNVYL…VFYSPNTLGQ (253 aa). The tract at residues 253-638 is COB intron 4 encoded; that stretch reads QNMALLLITY…LKFNEKWNNN (386 aa).

This sequence in the C-terminal section; belongs to the LAGLIDADG endonuclease family. In terms of assembly, forms a ternary complex with intron derived RNA and the imported mitochondrial leucyl-tRNA synthetase NAM2. The proteins do not interact directly with each other. The mature protein may arise from proteolytic cleavage of an in-frame translation of COB exons 1 to 4 plus intron 4, containing the bI4 open reading frame. Cleavage would take place close to the Met-385 resulting in an active maturase of about 30 kDa.

It is found in the mitochondrion. Functionally, mitochondrial mRNA maturase required for splicing of intron 4 of the cytochrome b (COB) gene, containing its own coding sequence, and intron 4 in COX1, coding for the related homing endonuclease aI4. In vivo splicing requires in addition the imported mitochondrial leucyl-tRNA synthetase NAM2. Both proteins seem to stimulate the intrinsic ribozyme activity of intron bI4 through binding to and stabilizing specific secondary and tertiary structure elements in the RNA. In Saccharomyces cerevisiae (strain ATCC 204508 / S288c) (Baker's yeast), this protein is Intron-encoded RNA maturase bI4 (BI4).